We begin with the raw amino-acid sequence, 446 residues long: MREIVYIQTGQCGNQIGAAFWQTISGEHGLDSNGIYNGSSELQLERMNVYFNEASNNKYVPRAVLVDLEPGTMDAVRAGPFGQLFRPDNFIFGQSSAGNNWAKGHYTEGAELVDQVLDVVRREAEGCDCLQGFQITHSLGGGTGSGMGTLLLSKIREEFPDRMMATFSVVPSPKVSDTVVEPYNATLSVHQLVENSDETFCIDNEALYDICMRTLKLNNPAYGDLNYLVSAVMSGITTCLRFPGQLNSDLRKLAVNMVPFPRLHFFMVGFAPLTSPGAHSFRAVTVPELTQQMFDPKNMMAASDFRNGRYLTCCSIFRGKVAMKEVEDQMRNVQNKNSTYFVEWIPNNIQTALCAIPPRGLKMSSTFIGNSTSIQELFKRVGEQFSAMFRRKAFLHWYTGEGMDEMEFTEAESNMNDLVSEYQQYQEAGIDEEEEYEDEAPMEAEE.

GTP is bound by residues Gln-11, Glu-69, Ser-138, Gly-142, Thr-143, Gly-144, Asn-204, and Asn-226. Glu-69 lines the Mg(2+) pocket.

The protein belongs to the tubulin family. As to quaternary structure, dimer of alpha and beta chains. A typical microtubule is a hollow water-filled tube with an outer diameter of 25 nm and an inner diameter of 15 nM. Alpha-beta heterodimers associate head-to-tail to form protofilaments running lengthwise along the microtubule wall with the beta-tubulin subunit facing the microtubule plus end conferring a structural polarity. Microtubules usually have 13 protofilaments but different protofilament numbers can be found in some organisms and specialized cells. Mg(2+) is required as a cofactor.

Its subcellular location is the cytoplasm. The protein localises to the cytoskeleton. Functionally, tubulin is the major constituent of microtubules, a cylinder consisting of laterally associated linear protofilaments composed of alpha- and beta-tubulin heterodimers. Microtubules grow by the addition of GTP-tubulin dimers to the microtubule end, where a stabilizing cap forms. Below the cap, tubulin dimers are in GDP-bound state, owing to GTPase activity of alpha-tubulin. This is Tubulin beta-2 chain (tub2) from Hypocrea rufa (Trichoderma viride).